Here is a 371-residue protein sequence, read N- to C-terminus: 2-aminoethylphosphonate--pyruvate transaminase (371 aa).

Lysine 195 bears the N6-(pyridoxal phosphate)lysine mark.

It belongs to the class-V pyridoxal-phosphate-dependent aminotransferase family. PhnW subfamily. As to quaternary structure, homotetramer; however this is for an enzyme with a molecular weight of 16500, which is in disagreement with the weight of this protein. Pyridoxal 5'-phosphate serves as cofactor.

It catalyses the reaction (2-aminoethyl)phosphonate + pyruvate = phosphonoacetaldehyde + L-alanine. Inhibited by phosphonic acids and very slightly inhibited by aminophosphonic acids. In terms of biological role, involved in phosphonate degradation. This is 2-aminoethylphosphonate--pyruvate transaminase (phnW) from Pseudomonas aeruginosa (strain ATCC 15692 / DSM 22644 / CIP 104116 / JCM 14847 / LMG 12228 / 1C / PRS 101 / PAO1).